Here is a 647-residue protein sequence, read N- to C-terminus: Probable cobalt/nickel-exporting P-type ATPase (647 aa).

5 helical membrane-spanning segments follow: residues 33-53, 55-75, 94-114, 260-280, and 291-311; these read WAAA…LGAP, AVVW…PAWV, AAIG…IVIF, AGVV…GADL, and MIVA…LSAI. The 4-aspartylphosphate intermediate role is filled by D339. Mg(2+) contacts are provided by D532 and D536. Residues 587 to 607 traverse the membrane as a helical segment; the sequence is VIANLVMAGAAITTLVLWDLF.

The protein belongs to the cation transport ATPase (P-type) (TC 3.A.3) family. Type IB subfamily.

The protein resides in the cell membrane. It catalyses the reaction Ni(2+)(out) + ATP + H2O = Ni(2+)(in) + ADP + phosphate + H(+). The enzyme catalyses Co(2+)(out) + ATP + H2O = Co(2+)(in) + ADP + phosphate + H(+). Involved in heavy metal homeostasis. Probably exports nickel and cobalt ions out of the cell. The chain is Probable cobalt/nickel-exporting P-type ATPase (ctpD) from Mycolicibacterium smegmatis (strain ATCC 700084 / mc(2)155) (Mycobacterium smegmatis).